Reading from the N-terminus, the 877-residue chain is Kinetochore null protein 2 (877 aa).

The 88-residue stretch at 20–107 folds into the SANTA domain; sequence IRLNLWSMKF…SNGIPENWAD (88 aa). Disordered regions lie at residues 122–315, 338–535, and 549–604; these read RPIQ…SKSV, FEST…ESLN, and MMFG…NDSI. A coiled-coil region spans residues 153 to 211; that stretch reads QKNSENEKERNRREREEQQTKERERRLEEEKQRRDAEAEAERRRKEEEELEEANYTLRA. Positions 156–199 are enriched in basic and acidic residues; it reads SENEKERNRREREEQQTKERERRLEEEKQRRDAEAEAERRRKEE. Positions 251–279 are enriched in polar residues; the sequence is IASSTPQQKQRLADGANNQIPPTQKSQDS. 3 stretches are compositionally biased toward basic and acidic residues: residues 359–385, 394–444, and 453–480; these read EPRH…DNSR, RRHE…RGRD, and VRFE…DYGR. Residues 491–549 are a coiled coil; the sequence is EDEEKLNAIVRREKELRNRLQKSQKASSSSYRHRSNSSDAEESLNEWDIENQELLDNSM. Low complexity predominate over residues 511–520; sequence QKSQKASSSS. Residues 573–583 are compositionally biased toward polar residues; it reads RSKPANSTKSP. The span at 592 to 601 shows a compositional bias: basic and acidic residues; it reads ASLEDNRDLN. In terms of domain architecture, Myb-like spans 617–678; it reads VAKKITWRKQ…AITRLKWVEP (62 aa). Disordered regions lie at residues 757–785 and 808–877; these read RGGT…FNSP and MQAR…TSIY. Polar residues-rich tracts occupy residues 775–785 and 819–836; these read SRGNNSTFNSP and SSSM…TSIS. Residues 856–871 show a composition bias toward acidic residues; it reads EDDENEDNDDDDDMRE.

This sequence belongs to the KNL2 family. Interacts with hcp-3.

It is found in the nucleus. The protein localises to the chromosome. The protein resides in the centromere. It localises to the kinetochore. Its function is as follows. Required for the recruitment of hcp-3, hcp-4, knl-1, bub-1 and lin-53 to kinetochores, kinetochore assembly, chromosome condensation and chromosome segregation in meiosis and mitosis. This is Kinetochore null protein 2 from Caenorhabditis elegans.